The primary structure comprises 939 residues: Zinc finger RNA-binding protein 2 (939 aa).

8 disordered regions span residues 1 to 72, 116 to 185, 217 to 264, 289 to 314, 360 to 389, 401 to 449, 545 to 590, and 906 to 939; these read MATS…AYGS, GRMT…IVTS, FYPP…PKAG, HLGGQKHRKKEAAQKTGVQPNGSPRG, LEPALATESPPGAEAKPTSPTGPSVCASSR, ALCE…DAQP, RLEE…SSDD, and RLGARFRKRQRGPGEGEEGAGEKKRGRRGGEGLV. 2 stretches are compositionally biased toward polar residues: residues 137 to 147 and 157 to 184; these read PHGSHSHAQPP and QPASTLSSGYTYPTATGVQPESSASIVT. The segment covering 217–239 has biased composition (pro residues); the sequence is FYPPAQPPPPPGPPQQLPPPPAP. The stretch at 516–549 forms a coiled coil; the sequence is KVLEERMRKQRHLAEERLEQLRRWHAERRRLEEE. Residues 570–935 enclose the DZF domain; it reads RPESPASAPL…GEKKRGRRGG (366 aa). Residues 906–916 are compositionally biased toward basic residues; the sequence is RLGARFRKRQR.

This is Zinc finger RNA-binding protein 2 (ZFR2) from Homo sapiens (Human).